We begin with the raw amino-acid sequence, 116 residues long: RNA guanine-N7 methyltransferase activating subunit (116 aa).

The interaction with RNMT stretch occupies residues 1–55 (MAEALGAQELYEKMFEQRFTANDKEYQEYLKREQDQPPIVEDWKMGNQRNTDRYR). Positions 31-116 (KREQDQPPIV…SNQRFHSDRY (86 aa)) are disordered. The RNMT-activating domain motif lies at 36-42 (QPPIVED). Positions 56–116 (DNRHHRGWDG…SNQRFHSDRY (61 aa)) are RNA-binding. Residues 67 to 78 (QNWSSNSYNQSY) are compositionally biased toward low complexity. Over residues 97 to 110 (YQQGHYTHNPSNQR) the composition is skewed to polar residues.

It belongs to the RAM family.

Its subcellular location is the nucleus. Regulatory subunit of the mRNA-capping methyltransferase RNMT:RAMAC complex that methylates the N7 position of the added guanosine to the 5'-cap structure of mRNAs. Promotes the recruitment of the methyl donor, S-adenosyl-L-methionine, to RNMT. Regulates RNMT expression by a post-transcriptional stabilizing mechanism. Binds RNA. The chain is RNA guanine-N7 methyltransferase activating subunit (ramac) from Xenopus tropicalis (Western clawed frog).